The sequence spans 578 residues: Proline--tRNA ligase (578 aa).

Belongs to the class-II aminoacyl-tRNA synthetase family. ProS type 1 subfamily. As to quaternary structure, homodimer.

It localises to the cytoplasm. It carries out the reaction tRNA(Pro) + L-proline + ATP = L-prolyl-tRNA(Pro) + AMP + diphosphate. In terms of biological role, catalyzes the attachment of proline to tRNA(Pro) in a two-step reaction: proline is first activated by ATP to form Pro-AMP and then transferred to the acceptor end of tRNA(Pro). As ProRS can inadvertently accommodate and process non-cognate amino acids such as alanine and cysteine, to avoid such errors it has two additional distinct editing activities against alanine. One activity is designated as 'pretransfer' editing and involves the tRNA(Pro)-independent hydrolysis of activated Ala-AMP. The other activity is designated 'posttransfer' editing and involves deacylation of mischarged Ala-tRNA(Pro). The misacylated Cys-tRNA(Pro) is not edited by ProRS. This chain is Proline--tRNA ligase, found in Burkholderia cenocepacia (strain HI2424).